The following is a 515-amino-acid chain: Glucose-6-phosphate 1-dehydrogenase 6, cytoplasmic (515 aa).

NADP(+) is bound by residues glycine 38–lysine 45, arginine 73, tyrosine 155, and lysine 182. Residues lysine 182, histidine 212–lysine 216, glutamate 250, and aspartate 269 contribute to the D-glucose 6-phosphate site. Histidine 274 serves as the catalytic Proton acceptor. Residue lysine 357 coordinates NADP(+). The D-glucose 6-phosphate site is built by lysine 360 and arginine 365. Residues lysine 366, arginine 370, and arginine 394 each contribute to the NADP(+) site. Glutamine 396 contacts D-glucose 6-phosphate. NADP(+) is bound by residues tyrosine 402–lysine 404, aspartate 422–serine 424, arginine 488, and tryptophan 510.

It belongs to the glucose-6-phosphate dehydrogenase family. Forms homodimer. As to expression, expressed in roots, leaves, stems, buds, flowers and siliques.

Its subcellular location is the cytoplasm. It localises to the cytosol. It carries out the reaction D-glucose 6-phosphate + NADP(+) = 6-phospho-D-glucono-1,5-lactone + NADPH + H(+). It functions in the pathway carbohydrate degradation; pentose phosphate pathway; D-ribulose 5-phosphate from D-glucose 6-phosphate (oxidative stage): step 1/3. Regulated by metabolites. In terms of biological role, catalyzes the rate-limiting step of the oxidative pentose-phosphate pathway, which represents a route for the dissimilation of carbohydrates besides glycolysis. The main function of this enzyme is to provide reducing power (NADPH) and pentose phosphates for fatty acid and nucleic acid synthesis which are involved in membrane synthesis and cell division. The sequence is that of Glucose-6-phosphate 1-dehydrogenase 6, cytoplasmic from Arabidopsis thaliana (Mouse-ear cress).